Consider the following 102-residue polypeptide: Crustacean hyperglycemic hormones 3 (102 aa).

The signal sequence occupies residues 1–22 (MIALRLIAVTLVVAMAASTTWA). Intrachain disulfides connect Cys-35–Cys-71, Cys-51–Cys-67, and Cys-54–Cys-80. Residue Val-100 is modified to Valine amide.

This sequence belongs to the arthropod CHH/MIH/GIH/VIH hormone family.

Its subcellular location is the secreted. Hormone found in the sinus gland of isopods and decapods which controls the blood sugar level. Has a secretagogue action over the amylase released from the midgut gland. May act as a stress hormone and may be involved in the control of molting and reproduction. This chain is Crustacean hyperglycemic hormones 3 (CHH3), found in Penaeus monodon (Giant tiger prawn).